Consider the following 1513-residue polypeptide: Exo-beta-1,6-galactobiohydrolase (1513 aa).

Positions 1–31 are cleaved as a signal peptide; the sequence is MRVLSKSLAAMVAAATLVGGGAFAVAGTAYA. Residues 666-801 form the Ricin B-type lectin domain; sequence VADTTSGDSA…PSANQTWTLR (136 aa). 2 F5/8 type C domains span residues 965–1112 and 1116–1273; these read AIYV…AFVT and GAAK…VFAQ. The disordered stretch occupies residues 1456 to 1480; that stretch reads VAPGPEEQKPGNTNKPGATGNGNKN. Polar residues predominate over residues 1465-1480; it reads PGNTNKPGATGNGNKN. The chain crosses the membrane as a helical span at residues 1489–1509; the sequence is VAAIAGAVALLAAAAGALFML.

This sequence belongs to the glycosyl hydrolase 30 family.

The protein resides in the cell membrane. The catalysed reaction is Hydrolysis of (1-&gt;6)-beta-D-galactosidic linkages in arabinogalactan proteins and (1-&gt;3):(1-&gt;6)-beta-galactans to yield (1-&gt;6)-beta-galactobiose as the final product.. Its function is as follows. Involved in the type II arabinogalactan (AG) side chains degradation. Specifically releases the non-reducing terminal beta-1,6-galactobiose (beta-1,6-Gal2) from both dearabinosylated larch AG and polymeric beta-1,6-galactan chains by an exo-mode of action. Shows lower activity with larch AG, and very weak activity with dearabinosylated gum arabic, gum arabic and potato galactan. Can probably release beta-1,6-Gal2 from the internal side chains of type II AG. The protein is Exo-beta-1,6-galactobiohydrolase of Bifidobacterium longum subsp. longum (strain ATCC 15707 / DSM 20219 / JCM 1217 / NCTC 11818 / E194b).